Reading from the N-terminus, the 265-residue chain is H-2 class II histocompatibility antigen, A-Q beta chain (265 aa).

Residues 1–27 form the signal peptide; sequence MALQIPSLLLSAAVVVLMVLSSPRTEG. The beta-1 stretch occupies residues 28 to 122; that stretch reads GNSERHFVAQ…VETHTSLRRL (95 aa). At 28 to 227 the chain is on the extracellular side; the sequence is GNSERHFVAQ…AQSESARSKM (200 aa). 2 cysteine pairs are disulfide-bonded: Cys42–Cys106 and Cys145–Cys201. The N-linked (GlcNAc...) asparagine glycan is linked to Asn46. Residues 123 to 217 form a beta-2 region; the sequence is EQPNVAISLS…LKSPITVEWR (95 aa). The region spanning 125 to 213 is the Ig-like C1-type domain; that stretch reads PNVAISLSRT…EHPSLKSPIT (89 aa). The connecting peptide stretch occupies residues 218 to 227; the sequence is AQSESARSKM. Residues 228–247 form a helical membrane-spanning segment; the sequence is LSGIGGCVLGVIFLGLGLFI. At 248-265 the chain is on the cytoplasmic side; it reads RHRSQKGPRGPPPAGLLQ.

It belongs to the MHC class II family. In terms of processing, ubiquitinated in immature dendritic cells leading to down-regulation of MHC class II.

Its subcellular location is the membrane. The polypeptide is H-2 class II histocompatibility antigen, A-Q beta chain (H2-Ab1) (Mus musculus (Mouse)).